A 117-amino-acid polypeptide reads, in one-letter code: UPF0122 protein TTE1463 (117 aa).

The protein belongs to the UPF0122 family.

Functionally, might take part in the signal recognition particle (SRP) pathway. This is inferred from the conservation of its genetic proximity to ftsY/ffh. May be a regulatory protein. This Caldanaerobacter subterraneus subsp. tengcongensis (strain DSM 15242 / JCM 11007 / NBRC 100824 / MB4) (Thermoanaerobacter tengcongensis) protein is UPF0122 protein TTE1463.